A 236-amino-acid chain; its full sequence is Uridylate kinase (236 aa).

Residue lysine 10–glycine 13 participates in ATP binding. Glycine 52 is a UMP binding site. ATP contacts are provided by glycine 53 and arginine 57. UMP contacts are provided by residues aspartate 72 and threonine 133 to threonine 140. Threonine 160, tyrosine 166, and aspartate 169 together coordinate ATP.

The protein belongs to the UMP kinase family. As to quaternary structure, homohexamer.

It is found in the cytoplasm. It carries out the reaction UMP + ATP = UDP + ADP. The protein operates within pyrimidine metabolism; CTP biosynthesis via de novo pathway; UDP from UMP (UMPK route): step 1/1. Its activity is regulated as follows. Inhibited by UTP. Functionally, catalyzes the reversible phosphorylation of UMP to UDP. The sequence is that of Uridylate kinase from Parabacteroides distasonis (strain ATCC 8503 / DSM 20701 / CIP 104284 / JCM 5825 / NCTC 11152).